The sequence spans 557 residues: 2-succinyl-5-enolpyruvyl-6-hydroxy-3-cyclohexene-1-carboxylate synthase (557 aa).

It belongs to the TPP enzyme family. MenD subfamily. Homodimer. Mg(2+) is required as a cofactor. Requires Mn(2+) as cofactor. It depends on thiamine diphosphate as a cofactor.

It catalyses the reaction isochorismate + 2-oxoglutarate + H(+) = 5-enolpyruvoyl-6-hydroxy-2-succinyl-cyclohex-3-ene-1-carboxylate + CO2. It functions in the pathway quinol/quinone metabolism; 1,4-dihydroxy-2-naphthoate biosynthesis; 1,4-dihydroxy-2-naphthoate from chorismate: step 2/7. Its pathway is quinol/quinone metabolism; menaquinone biosynthesis. Its function is as follows. Catalyzes the thiamine diphosphate-dependent decarboxylation of 2-oxoglutarate and the subsequent addition of the resulting succinic semialdehyde-thiamine pyrophosphate anion to isochorismate to yield 2-succinyl-5-enolpyruvyl-6-hydroxy-3-cyclohexene-1-carboxylate (SEPHCHC). The polypeptide is 2-succinyl-5-enolpyruvyl-6-hydroxy-3-cyclohexene-1-carboxylate synthase (Yersinia enterocolitica serotype O:8 / biotype 1B (strain NCTC 13174 / 8081)).